The following is a 510-amino-acid chain: uncharacterized protein (510 aa).

4 disordered regions span residues 1–154, 208–227, 234–276, and 368–480; these read MGSP…ATFL, DGNH…GDLA, TRES…QGIL, and NFYT…GCPR. Ser43 carries the phosphoserine modification. Residues 50-60 are compositionally biased toward polar residues; sequence PLVSQQDTSEA. The segment covering 78-92 has biased composition (basic and acidic residues); it reads EEERLGSPEDEKMDG. Ser84 is modified (phosphoserine). Composition is skewed to polar residues over residues 97–109 and 118–135; these read SQPS…QVAN and QPSS…SNRR. Ser120 is subject to Phosphoserine. The span at 139–151 shows a compositional bias: low complexity; it reads ASGSEEAKAASAA. Residues 243 to 255 are compositionally biased toward low complexity; that stretch reads SSLLTTTRGLTSG. Residues 379 to 395 are compositionally biased toward basic and acidic residues; sequence RTKELQLVAKEDTDSTR. The segment covering 414–441 has biased composition (polar residues); it reads SVHQEFSSGDINTRSLQDPGNSQSSGLS.

This is an uncharacterized protein from Rattus norvegicus (Rat).